A 90-amino-acid polypeptide reads, in one-letter code: Probable Fe(2+)-trafficking protein (90 aa).

This sequence belongs to the Fe(2+)-trafficking protein family. In terms of assembly, monomer.

Functionally, could be a mediator in iron transactions between iron acquisition and iron-requiring processes, such as synthesis and/or repair of Fe-S clusters in biosynthetic enzymes. The sequence is that of Probable Fe(2+)-trafficking protein from Yersinia pseudotuberculosis serotype O:1b (strain IP 31758).